The chain runs to 384 residues: Farnesyl pyrophosphate synthase 1, mitochondrial (384 aa).

Isopentenyl diphosphate is bound by residues K89, R92, and Q128. Residues D135 and D139 each contribute to the Mg(2+) site. R144 contributes to the dimethylallyl diphosphate binding site. R145 lines the isopentenyl diphosphate pocket. Residues K232, T233, Q271, K288, and K297 each contribute to the dimethylallyl diphosphate site.

It belongs to the FPP/GGPP synthase family. Mg(2+) serves as cofactor. The FPS1L mRNA accumulates preferentially in inflorescences, whereas the FPS1S mRNA is predominantly expressed in roots and inflorescences.

The protein resides in the mitochondrion. The protein localises to the cytoplasm. It carries out the reaction isopentenyl diphosphate + dimethylallyl diphosphate = (2E)-geranyl diphosphate + diphosphate. The enzyme catalyses isopentenyl diphosphate + (2E)-geranyl diphosphate = (2E,6E)-farnesyl diphosphate + diphosphate. It functions in the pathway isoprenoid biosynthesis; farnesyl diphosphate biosynthesis; farnesyl diphosphate from geranyl diphosphate and isopentenyl diphosphate: step 1/1. Its pathway is isoprenoid biosynthesis; geranyl diphosphate biosynthesis; geranyl diphosphate from dimethylallyl diphosphate and isopentenyl diphosphate: step 1/1. Its function is as follows. Catalyzes the sequential condensation of isopentenyl pyrophosphate with the allylic pyrophosphates, dimethylallyl pyrophosphate, and then with the resultant geranylpyrophosphate to the ultimate product farnesyl pyrophosphate. The polypeptide is Farnesyl pyrophosphate synthase 1, mitochondrial (FPS1) (Arabidopsis thaliana (Mouse-ear cress)).